We begin with the raw amino-acid sequence, 556 residues long: MKTDIEIAQEAEMLHIRNIAEKLGLDEEDIEYYGKYKCKISLDVYNKVKNNRDGKLVLVTAINPTPAGEGKSTVTVGLGDALNKMGKNTVIALREPSLGPVFGIKGGAAGGGYAQVVPMEDINLHFTGDMHAITSANNLLSAAIDNHIHQGNNLRIDSRRIIFKRVMDMNDRALRKIIVGMGGKINGFVREDGFTITVASEIMAILCLASDLEDLKHRMGDILIAYDLDGNPVYAKQLEIQGAMALLMKDAIKPNLVQTLENTPALIHGGPFANIAHGCNSIMATKLSLKLGDIVVTEAGFGADLGAEKFFDIKCRYGNLKPCCVVIVATIRALKHHGGVAKADLNIPNVEALRLGIANLEKQIENIKKFNVEPVVAINKFVSDSDEEVEFIKEFCEKLGVKVALSDVWAKGGDGGIELGEAVLDVIEKDKSSFKTLYKADNTIEEKILTIAKEIYGADGVVYSNEAKKQIGELVKFNLDKLPICMAKTQYSLSDNPNLLAKPSGFNINVQEIRVSNGAGFIVVQTGNIMTMPGLPKVPAANKMDVLKDGEIVGLF.

Residue 65–72 (TPAGEGKS) participates in ATP binding.

It belongs to the formate--tetrahydrofolate ligase family.

It carries out the reaction (6S)-5,6,7,8-tetrahydrofolate + formate + ATP = (6R)-10-formyltetrahydrofolate + ADP + phosphate. The protein operates within one-carbon metabolism; tetrahydrofolate interconversion. The protein is Formate--tetrahydrofolate ligase of Clostridium botulinum (strain Alaska E43 / Type E3).